We begin with the raw amino-acid sequence, 119 residues long: Small ribosomal subunit protein bS6 (119 aa).

The protein belongs to the bacterial ribosomal protein bS6 family.

Its function is as follows. Binds together with bS18 to 16S ribosomal RNA. This is Small ribosomal subunit protein bS6 from Thermosipho africanus (strain TCF52B).